Reading from the N-terminus, the 304-residue chain is Acetylglutamate kinase (304 aa).

Substrate-binding positions include 70 to 71 (GG), Arg92, and Asn196.

This sequence belongs to the acetylglutamate kinase family. ArgB subfamily.

The protein localises to the cytoplasm. It catalyses the reaction N-acetyl-L-glutamate + ATP = N-acetyl-L-glutamyl 5-phosphate + ADP. It participates in amino-acid biosynthesis; L-arginine biosynthesis; N(2)-acetyl-L-ornithine from L-glutamate: step 2/4. Functionally, catalyzes the ATP-dependent phosphorylation of N-acetyl-L-glutamate. This is Acetylglutamate kinase from Methanococcoides burtonii (strain DSM 6242 / NBRC 107633 / OCM 468 / ACE-M).